We begin with the raw amino-acid sequence, 258 residues long: Ribosomal RNA small subunit methyltransferase J (258 aa).

S-adenosyl-L-methionine-binding positions include 123-124 and Asp-177; that span reads ER. Residues 232–258 are disordered; the sequence is IDGPKPSHSLEGKSSRYDIYPKKALKA. The segment covering 239–252 has biased composition (basic and acidic residues); that stretch reads HSLEGKSSRYDIYP.

The protein belongs to the methyltransferase superfamily. RsmJ family.

The protein localises to the cytoplasm. The enzyme catalyses guanosine(1516) in 16S rRNA + S-adenosyl-L-methionine = N(2)-methylguanosine(1516) in 16S rRNA + S-adenosyl-L-homocysteine + H(+). Specifically methylates the guanosine in position 1516 of 16S rRNA. This Pseudomonas putida (strain W619) protein is Ribosomal RNA small subunit methyltransferase J.